The sequence spans 356 residues: Tyrosine recombinase XerS (356 aa).

Residues 16-121 (LMPWYVLEYY…ALSSLYKYLT (106 aa)) enclose the Core-binding (CB) domain. The Tyr recombinase domain occupies 169 to 354 (GFLTYIDQEH…VNDEQKNALD (186 aa)). Active-site residues include Arg210, Lys234, His306, Arg309, and His332. Tyr341 functions as the O-(3'-phospho-DNA)-tyrosine intermediate in the catalytic mechanism.

This sequence belongs to the 'phage' integrase family. XerS subfamily.

Its subcellular location is the cytoplasm. Its activity is regulated as follows. FtsK is required for recombination. Functionally, site-specific tyrosine recombinase, which acts by catalyzing the cutting and rejoining of the recombining DNA molecules. Essential to convert dimers of the bacterial chromosome into monomers to permit their segregation at cell division. The polypeptide is Tyrosine recombinase XerS (Streptococcus pneumoniae (strain P1031)).